The sequence spans 400 residues: Methylthioribose kinase (400 aa).

Residues Asn40, Lys57, and 111–113 (EDL) each bind ATP. Position 229 (Asp229) interacts with substrate. 246-248 (DAE) provides a ligand contact to ATP. A substrate-binding site is contributed by Arg344.

It belongs to the methylthioribose kinase family. In terms of assembly, homodimer.

It carries out the reaction 5-(methylsulfanyl)-D-ribose + ATP = 5-(methylsulfanyl)-alpha-D-ribose 1-phosphate + ADP + H(+). The protein operates within amino-acid biosynthesis; L-methionine biosynthesis via salvage pathway; S-methyl-5-thio-alpha-D-ribose 1-phosphate from S-methyl-5'-thioadenosine (hydrolase route): step 2/2. Its function is as follows. Catalyzes the phosphorylation of methylthioribose into methylthioribose-1-phosphate. The sequence is that of Methylthioribose kinase from Pectobacterium carotovorum subsp. carotovorum (strain PC1).